We begin with the raw amino-acid sequence, 414 residues long: Dual-specificity RNA methyltransferase RlmN (414 aa).

Low complexity predominate over residues 1 to 20 (MMSTPETATEATAPEAAPAP). The tract at residues 1-24 (MMSTPETATEATAPEAAPAPSLGA) is disordered. The active-site Proton acceptor is the E129. The 251-residue stretch at 135–385 (ESDRGTLCVS…VRTPRGRDIL (251 aa)) folds into the Radical SAM core domain. The cysteines at positions 142 and 388 are disulfide-linked. The [4Fe-4S] cluster site is built by C149, C153, and C156. S-adenosyl-L-methionine is bound by residues 214-215 (GE), S246, 268-270 (SLH), and N345. C388 acts as the S-methylcysteine intermediate in catalysis.

It belongs to the radical SAM superfamily. RlmN family. [4Fe-4S] cluster serves as cofactor.

It localises to the cytoplasm. It carries out the reaction adenosine(2503) in 23S rRNA + 2 reduced [2Fe-2S]-[ferredoxin] + 2 S-adenosyl-L-methionine = 2-methyladenosine(2503) in 23S rRNA + 5'-deoxyadenosine + L-methionine + 2 oxidized [2Fe-2S]-[ferredoxin] + S-adenosyl-L-homocysteine. It catalyses the reaction adenosine(37) in tRNA + 2 reduced [2Fe-2S]-[ferredoxin] + 2 S-adenosyl-L-methionine = 2-methyladenosine(37) in tRNA + 5'-deoxyadenosine + L-methionine + 2 oxidized [2Fe-2S]-[ferredoxin] + S-adenosyl-L-homocysteine. Specifically methylates position 2 of adenine 2503 in 23S rRNA and position 2 of adenine 37 in tRNAs. m2A2503 modification seems to play a crucial role in the proofreading step occurring at the peptidyl transferase center and thus would serve to optimize ribosomal fidelity. The protein is Dual-specificity RNA methyltransferase RlmN of Xanthobacter autotrophicus (strain ATCC BAA-1158 / Py2).